Reading from the N-terminus, the 224-residue chain is Prolactin-2C3 (224 aa).

A signal peptide spans 1-29 (MLPSSIQPCSWILLLLLVNSSLLWKNVAS). Asn-19 carries an N-linked (GlcNAc...) asparagine glycan. Cys-33 and Cys-40 are oxidised to a cystine. Residues Asn-57, Asn-75, and Asn-88 are each glycosylated (N-linked (GlcNAc...) asparagine). 2 cysteine pairs are disulfide-bonded: Cys-87–Cys-199 and Cys-216–Cys-224.

Belongs to the somatotropin/prolactin family. N-glycosylated and sialylated. Expressed in placenta and hair follicles, with highest expression levels detected in the outer root sheath and no expression detected in bulb. Expressed in placenta, skin wounds, keratinocytes and weakly in embryonic fibroblasts. Expressed in brain, cerebellum and in Neuro-2a cell line. Not detected in liver, kidney, ovary, pituitary gland and brain.

The protein localises to the secreted. Its subcellular location is the endoplasmic reticulum. May have a role in embryonic development. It is likely to provide a growth stimulus to target cells in maternal and fetal tissues during the development of the embryo at mid-gestation. May play a role during wound healing and in the hair follicle cycle as a growth factor and/or an angiogenesis factor. May play a role in microvilli formation and cell proliferation of neuroblastoma cells. In Mus musculus (Mouse), this protein is Prolactin-2C3 (Prl2c3).